The chain runs to 282 residues: Pantothenate synthetase (282 aa).

30-37 lines the ATP pocket; that stretch reads MGYLHEGH. The Proton donor role is filled by H37. Q61 provides a ligand contact to (R)-pantoate. A beta-alanine-binding site is contributed by Q61. 147–150 contacts ATP; it reads GMKD. Residue Q153 participates in (R)-pantoate binding. Residues V176 and 184-187 contribute to the ATP site; that span reads KSSR.

It belongs to the pantothenate synthetase family. In terms of assembly, homodimer.

The protein localises to the cytoplasm. The catalysed reaction is (R)-pantoate + beta-alanine + ATP = (R)-pantothenate + AMP + diphosphate + H(+). Its pathway is cofactor biosynthesis; (R)-pantothenate biosynthesis; (R)-pantothenate from (R)-pantoate and beta-alanine: step 1/1. In terms of biological role, catalyzes the condensation of pantoate with beta-alanine in an ATP-dependent reaction via a pantoyl-adenylate intermediate. The polypeptide is Pantothenate synthetase (Bacillus cereus (strain ATCC 10987 / NRS 248)).